The following is a 167-amino-acid chain: MATKEPESVYELSIEDAKGNNLALSQYKDKVLLIVNVASKCGMTNSNYTELNELYNRYKDKGLEILAFPCNQFGDEEPGTNDQITDFVCTRFKSEFPIFNKIEVNGENASPLYKFLKKGKWGIFGDDIQWNFAKFLVDKNGQAVQRYYPTTSPLTLEHDIKNLLNIS.

Cys41 is a catalytic residue.

The protein belongs to the glutathione peroxidase family.

It carries out the reaction 2 glutathione + H2O2 = glutathione disulfide + 2 H2O. Its function is as follows. May constitute a glutathione peroxidase-like protective system against oxidative stresses. This is Probable glutathione peroxidase 8 (GPX8) from Arabidopsis thaliana (Mouse-ear cress).